Consider the following 200-residue polypeptide: NAD(P)H-dependent FMN reductase C4B3.06c (200 aa).

FMN contacts are provided by residues Arg-22, 96 to 99 (QYNG), and Tyr-126.

As to quaternary structure, homodimer.

The protein resides in the cytoplasm. Its subcellular location is the nucleus. The catalysed reaction is FMNH2 + NADP(+) = FMN + NADPH + 2 H(+). The enzyme catalyses FMNH2 + NAD(+) = FMN + NADH + 2 H(+). Its function is as follows. Has several reductase activities that are NAD(P)H-dependent and involve FMN as a cofactor. May be involved in ferric iron assimilation. The polypeptide is NAD(P)H-dependent FMN reductase C4B3.06c (Schizosaccharomyces pombe (strain 972 / ATCC 24843) (Fission yeast)).